The sequence spans 357 residues: Histidinol-phosphate aminotransferase (357 aa).

N6-(pyridoxal phosphate)lysine is present on Lys218.

It belongs to the class-II pyridoxal-phosphate-dependent aminotransferase family. Histidinol-phosphate aminotransferase subfamily. In terms of assembly, homodimer. Pyridoxal 5'-phosphate is required as a cofactor.

It carries out the reaction L-histidinol phosphate + 2-oxoglutarate = 3-(imidazol-4-yl)-2-oxopropyl phosphate + L-glutamate. Its pathway is amino-acid biosynthesis; L-histidine biosynthesis; L-histidine from 5-phospho-alpha-D-ribose 1-diphosphate: step 7/9. This chain is Histidinol-phosphate aminotransferase, found in Prosthecochloris aestuarii (strain DSM 271 / SK 413).